The following is a 119-amino-acid chain: Holo-[acyl-carrier-protein] synthase (119 aa).

Asp-8 and Glu-59 together coordinate Mg(2+).

The protein belongs to the P-Pant transferase superfamily. AcpS family. Mg(2+) is required as a cofactor.

The protein resides in the cytoplasm. The catalysed reaction is apo-[ACP] + CoA = holo-[ACP] + adenosine 3',5'-bisphosphate + H(+). Its function is as follows. Transfers the 4'-phosphopantetheine moiety from coenzyme A to a Ser of acyl-carrier-protein. In Staphylococcus aureus (strain USA300), this protein is Holo-[acyl-carrier-protein] synthase.